The sequence spans 217 residues: GRB2-related adapter protein (217 aa).

The region spanning 1 to 58 is the SH3 1 domain; the sequence is MESVALYSFQATESDELAFNKGDTLKILNMEDDQNWYKAELRGVEGFIPKNYIRVKPH. An SH2 domain is found at 60 to 154; that stretch reads WYSGRISRQL…QIFLRDEEPL (95 aa). The SH3 2 domain maps to 158-217; that stretch reads PGACFAQAQFDFSAQDPSQLSFRRGDIIEVLERPDPHWWRGRSCGRVGFFPRSYVQPVHL.

This sequence belongs to the GRB2/sem-5/DRK family. Associates through its SH2 domain with ligand-activated receptors for stem cell factor (KIT) and erythropoietin (EPOR). Also forms a stable complex with the Bcr-Abl oncoprotein. GRAP is associated with the Ras guanine nucleotide exchange factor SOS1, primarily through its N-terminal SH3 domain. Interacts with phosphorylated LAT upon TCR activation. Interacts with SHB.

It is found in the membrane. Its subcellular location is the synapse. Couples signals from receptor and cytoplasmic tyrosine kinases to the Ras signaling pathway. Plays a role in the inner ear and in hearing. This is GRB2-related adapter protein from Homo sapiens (Human).